The sequence spans 287 residues: Pol-RFamide neuropeptides (287 aa).

An N-terminal signal peptide occupies residues 1–21; the sequence is MNLITLLVLGVSTCLIYGIEA. Residues 22 to 52 constitute a propeptide that is removed on maturation; that stretch reads DEKTSSALENEIVEILNGNFKNEKKSIETSD. A Pyrrolidone carboxylic acid modification is found at Gln53. Position 59 is a phenylalanine amide (Phe59). Residues 62 to 64 constitute a propeptide that is removed on maturation; that stretch reads EVN. Residue Gln65 is modified to Pyrrolidone carboxylic acid. At Phe71 the chain carries Phenylalanine amide. Residues 74–77 constitute a propeptide that is removed on maturation; the sequence is ELSD. Gln78 bears the Pyrrolidone carboxylic acid mark. Phenylalanine amide is present on Phe84. The propeptide occupies 87 to 90; that stretch reads ELSD. Gln91 is subject to Pyrrolidone carboxylic acid. Phenylalanine amide is present on Phe97. Residues 100-103 constitute a propeptide that is removed on maturation; the sequence is EVLD. Gln104 carries the pyrrolidone carboxylic acid modification. Phe110 carries the post-translational modification Phenylalanine amide. A propeptide spanning residues 113 to 116 is cleaved from the precursor; that stretch reads DASN. The residue at position 117 (Gln117) is a Pyrrolidone carboxylic acid. Phe123 bears the Phenylalanine amide mark. A propeptide spanning residues 126 to 129 is cleaved from the precursor; the sequence is ELSD. Gln130 is modified (pyrrolidone carboxylic acid). Phe136 is modified (phenylalanine amide). The propeptide occupies 139–142; sequence EGSN. Position 143 is a pyrrolidone carboxylic acid (Gln143). Phe149 is modified (phenylalanine amide). A propeptide spanning residues 152-168 is cleaved from the precursor; the sequence is EASKNDLEKQNGRGDSD. Gln169 is modified (pyrrolidone carboxylic acid). Position 175 is a phenylalanine amide (Phe175). A propeptide spanning residues 178-181 is cleaved from the precursor; it reads EARK. Residue Gln182 is modified to Pyrrolidone carboxylic acid. Phe188 is subject to Phenylalanine amide. The propeptide occupies 192–194; sequence DMN. At Gln195 the chain carries Pyrrolidone carboxylic acid. His201 is subject to Histidine amide. Residues 204–207 constitute a propeptide that is removed on maturation; it reads ETSD. Gln208 is modified (pyrrolidone carboxylic acid). The residue at position 214 (Phe214) is a Phenylalanine amide. A propeptide spanning residues 217 to 220 is cleaved from the precursor; it reads QLSD. The residue at position 221 (Gln221) is a Pyrrolidone carboxylic acid. A Phenylalanine amide modification is found at Phe227. The disordered stretch occupies residues 229–267; the sequence is REVKNDKNNPFRSRYTGDSTQLQRENNQPIEELRDNTEK. Residues 230–287 constitute a propeptide that is removed on maturation; the sequence is EVKNDKNNPFRSRYTGDSTQLQRENNQPIEELRDNTEKVSIENKPIMKKTSVKISKTV. Residues 238–257 show a composition bias toward polar residues; it reads PFRSRYTGDSTQLQRENNQP.

Belongs to the FARP (FMRFamide related peptide) family. The N-terminal processing sites of the Pol-RFamide peptides are acidic suggesting that cniderian nervous systems may use a variety of unconventional processing procedures.

Its subcellular location is the secreted. In terms of biological role, has direct action on motoneurons, and effect includes transient inhibition followed by prolonged excitation. The protein is Pol-RFamide neuropeptides of Polyorchis penicillatus (Hydromedusa).